The chain runs to 996 residues: Protein psiR (996 aa).

The first 21 residues, 1 to 21, serve as a signal peptide directing secretion; that stretch reads MKKIILMLLLFSIFFILKSES. N-linked (GlcNAc...) asparagine glycosylation is found at Asn79, Asn117, Asn323, Asn396, Asn428, Asn474, Asn500, Asn645, and Asn779. Residues 105-250 enclose the PA14 domain; it reads QSLSNPNIYS…YDECGVCEGD (146 aa).

Belongs to the prespore-cell-inducing factor family.

The protein resides in the secreted. In Dictyostelium discoideum (Social amoeba), this protein is Protein psiR (psiR).